A 115-amino-acid chain; its full sequence is ER exit protein (115 aa).

The protein belongs to the STEEP1 family.

May stimulate membrane curvature formation and subsequent endoplasmic reticulum exit site (ERES) establishment. The sequence is that of ER exit protein from Schizosaccharomyces pombe (strain 972 / ATCC 24843) (Fission yeast).